The primary structure comprises 598 residues: Fibulin-1 (598 aa).

Cystine bridges form between A1–C25, C7–C26, C28–C52, C29–C59, C42–C60, C96–C106, C102–C115, C117–C130, C136–C149, C143–C158, C164–C176, C182–C195, C189–C204, C210–C222, C228–C242, C257–C270, C275–C288, C282–C297, C299–C312, C318–C330, C326–C339, C341–C354, C360–C369, C365–C378, C380–C394, C400–C413, C409–C422, C424–C438, C444–C457, C451–C466, and C471–C483. 2 Anaphylatoxin-like domains span residues A1–H27 and C28–C60. The N-linked (GlcNAc...) asparagine glycan is linked to N14. The 40-residue stretch at L92–E131 folds into the EGF-like 1 domain. An EGF-like 2; calcium-binding domain is found at D132–K177. The EGF-like 3; calcium-binding domain occupies D178–I223. The 47-residue stretch at D224 to C270 folds into the EGF-like 4; calcium-binding domain. Positions D271 to V313 constitute an EGF-like 5; calcium-binding domain. The interval D271–E355 is self-association and FN1-binding. The 42-residue stretch at D314–E355 folds into the EGF-like 6; calcium-binding domain. One can recognise an EGF-like 7; calcium-binding domain in the interval D356 to E395. An EGF-like 8; calcium-binding domain is found at D396 to Q439. Residues D440–E484 enclose the EGF-like 9; calcium-binding domain. Residues N450 and N454 are each glycosylated (N-linked (GlcNAc...) asparagine).

Belongs to the fibulin family. Homomultimerizes and interacts with various extracellular matrix components. Interacts with FBLN7. Interacts with the mature/soluble form of DTR. Interacts with CCN3.

It localises to the secreted. Its subcellular location is the extracellular space. The protein resides in the extracellular matrix. Incorporated into fibronectin-containing matrix fibers. May play a role in cell adhesion and migration along protein fibers within the extracellular matrix (ECM). Could be important for certain developmental processes and contribute to the supramolecular organization of ECM architecture, in particular to those of basement membranes. May serve to anchor the mature/soluble form of DTR to its fibers as it migrates through the extracellular matrix. The direct physical association with DTR may be useful in such tissue developmental processes as wound healing. This is Fibulin-1 (FBLN1) from Chlorocebus aethiops (Green monkey).